A 230-amino-acid chain; its full sequence is Small ribosomal subunit protein uS3 (230 aa).

The 69-residue stretch at 39 to 107 (VRNYLFKKLI…PVHINIEEIK (69 aa)) folds into the KH type-2 domain.

This sequence belongs to the universal ribosomal protein uS3 family. As to quaternary structure, part of the 30S ribosomal subunit. Forms a tight complex with proteins S10 and S14.

Binds the lower part of the 30S subunit head. Binds mRNA in the 70S ribosome, positioning it for translation. In Vesicomyosocius okutanii subsp. Calyptogena okutanii (strain HA), this protein is Small ribosomal subunit protein uS3.